A 255-amino-acid chain; its full sequence is Geranylgeranylglyceryl phosphate synthase (255 aa).

Mg(2+) is bound by residues aspartate 34 and threonine 64. Sn-glycerol 1-phosphate-binding positions include 182–188 (YLEAGSG), 213–214 (GG), and 235–236 (GN).

Belongs to the GGGP/HepGP synthase family. Group II subfamily. It depends on Mg(2+) as a cofactor.

Its subcellular location is the cytoplasm. The enzyme catalyses sn-glycerol 1-phosphate + (2E,6E,10E)-geranylgeranyl diphosphate = sn-3-O-(geranylgeranyl)glycerol 1-phosphate + diphosphate. The protein operates within membrane lipid metabolism; glycerophospholipid metabolism. In terms of biological role, prenyltransferase that catalyzes the transfer of the geranylgeranyl moiety of geranylgeranyl diphosphate (GGPP) to the C3 hydroxyl of sn-glycerol-1-phosphate (G1P). This reaction is the first ether-bond-formation step in the biosynthesis of archaeal membrane lipids. This Saccharolobus islandicus (strain M.14.25 / Kamchatka #1) (Sulfolobus islandicus) protein is Geranylgeranylglyceryl phosphate synthase.